The chain runs to 105 residues: Phosphoribosyl-ATP pyrophosphatase (105 aa).

It belongs to the PRA-PH family.

It is found in the cytoplasm. The catalysed reaction is 1-(5-phospho-beta-D-ribosyl)-ATP + H2O = 1-(5-phospho-beta-D-ribosyl)-5'-AMP + diphosphate + H(+). It participates in amino-acid biosynthesis; L-histidine biosynthesis; L-histidine from 5-phospho-alpha-D-ribose 1-diphosphate: step 2/9. The chain is Phosphoribosyl-ATP pyrophosphatase from Ruegeria pomeroyi (strain ATCC 700808 / DSM 15171 / DSS-3) (Silicibacter pomeroyi).